The primary structure comprises 464 residues: Synaptosomal-associated protein 47 (464 aa).

The segment at 20–42 (GRLWDSSGVPQRQKRPGPWRTQT) is disordered. 2 t-SNARE coiled-coil homology domains span residues 154–216 (VADA…LTEL) and 401–463 (TSLP…MKRL).

This sequence belongs to the SVAP1 family. As to quaternary structure, forms a complex containing SNAP47, VAMP2 and STX1A. Associates with the BLOC-1 complex. Interacts with BLOC1S6.

The protein resides in the endomembrane system. Its subcellular location is the cytoplasm. It localises to the perinuclear region. In terms of biological role, plays a role in intracellular membrane fusion. The protein is Synaptosomal-associated protein 47 (SNAP47) of Homo sapiens (Human).